Consider the following 137-residue polypeptide: Venom allergen 4 (137 aa).

Residues 1–19 form the signal peptide; it reads MKTFVLVSCLLVFTQIIYA.

The protein belongs to the ant venom allergen 2/4 family. Monomer. As to expression, expressed by the venom gland.

It is found in the secreted. This is Venom allergen 4 from Solenopsis invicta (Red imported fire ant).